The primary structure comprises 251 residues: YlmG homolog protein 2, chloroplastic (251 aa).

The N-terminal 51 residues, 1–51, are a transit peptide targeting the chloroplast; it reads MEASANEPAMKSLKSNPSGPIPNFFVSLSSAFTQTPLVRSNKPNLLLLPPV. 2 helical membrane passes run 119–139 and 183–203; these read GFAAVLPGDSVAGLVVANGLI and FIPPLGGLDLSPILAFLVLNA. Over residues 232–243 the composition is skewed to basic residues; that stretch reads VRRRRLSSHKDH. The interval 232–251 is disordered; that stretch reads VRRRRLSSHKDHRPSSASMT.

It belongs to the YggT family.

It is found in the plastid. Its subcellular location is the chloroplast thylakoid membrane. Its function is as follows. Not required for the biogenesis and accumulation of native cytochrome b6 in the thylakoid membrane. Not functionally involved in the pathway for covalent binding of the c-type heme to cytochrome b6. The chain is YlmG homolog protein 2, chloroplastic from Arabidopsis thaliana (Mouse-ear cress).